Reading from the N-terminus, the 57-residue chain is Protein translocase subunit SecE (57 aa).

A helical membrane pass occupies residues 33–53 (GLGILLVGFIGFVIFSIMTFV).

It belongs to the SecE/SEC61-gamma family. Component of the Sec protein translocase complex. Heterotrimer consisting of SecY (alpha), SecG (beta) and SecE (gamma) subunits. The heterotrimers can form oligomers, although 1 heterotrimer is thought to be able to translocate proteins. Interacts with the ribosome. May interact with SecDF, and other proteins may be involved.

It localises to the cell membrane. Essential subunit of the Sec protein translocation channel SecYEG. Clamps together the 2 halves of SecY. May contact the channel plug during translocation. The protein is Protein translocase subunit SecE of Natronomonas pharaonis (strain ATCC 35678 / DSM 2160 / CIP 103997 / JCM 8858 / NBRC 14720 / NCIMB 2260 / Gabara) (Halobacterium pharaonis).